A 319-amino-acid chain; its full sequence is Proline hydroxylase buaE (319 aa).

A Fe2OG dioxygenase domain is found at 168–280; sequence NSSELRLNHY…RYSIAYFGKP (113 aa). Fe cation-binding residues include histidine 195, aspartate 197, and histidine 255. A 2-oxoglutarate-binding site is contributed by arginine 271.

The protein belongs to the iron/ascorbate-dependent oxidoreductase family. Fe(2+) is required as a cofactor.

It participates in mycotoxin biosynthesis. In terms of biological role, proline hydroxylase; part of the gene cluster that mediates the biosynthesis of burnettramic acids, an unusual class of bolaamphiphilic pyrrolizidinediones that display potent antibacterial, antifungal, and cytotoxic activities. The first step of the biosynthesis of burnettramic acids is the hydroxylation of proline by the proline hydroxylase buaE to generate 4-hydroxyproline. The PKS-NRPS buaA and trans-enoyl reductase buaC construct the highly reduced polyketide chain, and the condensation (C) domain of buaA then catalyzes the amide bond formation with the activated 4-hydroxyproline. This is followed by the R domain releasing the nascent polyketide-peptide directly via a Dieckmann condensation to afford a tetramic acid fused to the hydroxyproline, generating the bicyclic pyrrolidinedione moiety. The cytochrome P450 monooxygenases buaD and buaG are likely responsible for the multiple hydroxylations on the polyketide chain and its terminus, although in the heterologous context, buaD does not appear to be required. Therefore, while buaG may be a multifunctional cytochrome P450 monooxygenase, it cannot be ruled out that the two secondary alcohols on the polyketide chain could have an acetate origin. Finally, the glycosyltransferase buaB transfers beta-D-mannose to the aglycone burnettramic acid A to form burnettramic acid A. Burnettramic acid B is a minor cis-pyrrolizidine epimer of burnettramic acid A and it is likely that small amounts of it form naturally in acidic environments. The protein is Proline hydroxylase buaE of Petromyces alliaceus (Aspergillus alliaceus).